The sequence spans 204 residues: Thiamine-phosphate synthase (204 aa).

4-amino-2-methyl-5-(diphosphooxymethyl)pyrimidine contacts are provided by residues 32 to 36 (QLRMK) and aspartate 64. Mg(2+) contacts are provided by aspartate 65 and aspartate 84. Threonine 103 lines the 4-amino-2-methyl-5-(diphosphooxymethyl)pyrimidine pocket. Position 129 to 131 (129 to 131 (TTT)) interacts with 2-[(2R,5Z)-2-carboxy-4-methylthiazol-5(2H)-ylidene]ethyl phosphate. Position 132 (lysine 132) interacts with 4-amino-2-methyl-5-(diphosphooxymethyl)pyrimidine. Glycine 165 is a 2-[(2R,5Z)-2-carboxy-4-methylthiazol-5(2H)-ylidene]ethyl phosphate binding site.

Belongs to the thiamine-phosphate synthase family. The cofactor is Mg(2+).

It catalyses the reaction 2-[(2R,5Z)-2-carboxy-4-methylthiazol-5(2H)-ylidene]ethyl phosphate + 4-amino-2-methyl-5-(diphosphooxymethyl)pyrimidine + 2 H(+) = thiamine phosphate + CO2 + diphosphate. The enzyme catalyses 2-(2-carboxy-4-methylthiazol-5-yl)ethyl phosphate + 4-amino-2-methyl-5-(diphosphooxymethyl)pyrimidine + 2 H(+) = thiamine phosphate + CO2 + diphosphate. It carries out the reaction 4-methyl-5-(2-phosphooxyethyl)-thiazole + 4-amino-2-methyl-5-(diphosphooxymethyl)pyrimidine + H(+) = thiamine phosphate + diphosphate. Its pathway is cofactor biosynthesis; thiamine diphosphate biosynthesis; thiamine phosphate from 4-amino-2-methyl-5-diphosphomethylpyrimidine and 4-methyl-5-(2-phosphoethyl)-thiazole: step 1/1. Functionally, condenses 4-methyl-5-(beta-hydroxyethyl)thiazole monophosphate (THZ-P) and 2-methyl-4-amino-5-hydroxymethyl pyrimidine pyrophosphate (HMP-PP) to form thiamine monophosphate (TMP). The sequence is that of Thiamine-phosphate synthase from Bacteroides fragilis (strain ATCC 25285 / DSM 2151 / CCUG 4856 / JCM 11019 / LMG 10263 / NCTC 9343 / Onslow / VPI 2553 / EN-2).